Consider the following 432-residue polypeptide: UPF0597 protein APJL_1638 (432 aa).

It belongs to the UPF0597 family.

The polypeptide is UPF0597 protein APJL_1638 (Actinobacillus pleuropneumoniae serotype 3 (strain JL03)).